Consider the following 1466-residue polypeptide: ABC transporter C family member 6 (1466 aa).

Helical transmembrane passes span 16–36 (SVLSFFLNLVLLLILFGSWLF), 63–83 (LVLICCVSLSVFYSVLSLLSC), 91–111 (WPFLDLLLAALTWGSISVYLF), 128–148 (VWWVFFFVVSCYHLVVDFVLY), 158–178 (FVISDLVGVCAGLFLCCSCLW), 286–306 (IVLSALLAFVYTVSCYVAPYL), 322–339 (NQGYVLVTTFFVAKLVEC), 400–420 (WFMHDPWILVLQVSLALWILY), 425–445 (LGSIAAFPATILVMLANYPFA), and 512–532 (SVLWAAPSFISATAFGACLLL). Residues 286–567 (IVLSALLAFV…LPETISMIVQ (282 aa)) enclose the ABC transmembrane type-1 1 domain. An ABC transporter 1 domain is found at 601 to 824 (VEISNGTFSW…GTDFMELVGA (224 aa)). 636–643 (GTVGSGKS) is an ATP binding site. A disordered region spans residues 840–876 (ASEKSTTDKENEVLHHKEKQENGSDNKPSGQLVQEEE). Positions 844-863 (STTDKENEVLHHKEKQENGS) are enriched in basic and acidic residues. The next 3 membrane-spanning stretches (helical) occupy residues 890–910 (YMALAYGGAVIPLILVVQVLF), 937–957 (GFTLILVYVLLAVASSFCILI), and 1026–1046 (ILGIIGVIVQVAWQVLIVFIP). Positions 900–1182 (IPLILVVQVL…LIWTLCDLEN (283 aa)) constitute an ABC transmembrane type-1 2 domain. The ABC transporter 2 domain maps to 1219 to 1453 (ITICNLQVRY…RSSLFSKLVA (235 aa)). 1253 to 1260 (GRTGCGKS) contacts ATP.

This sequence belongs to the ABC transporter superfamily. ABCC family. Conjugate transporter (TC 3.A.1.208) subfamily. In terms of tissue distribution, ubiquitous.

The protein localises to the membrane. It carries out the reaction ATP + H2O + xenobioticSide 1 = ADP + phosphate + xenobioticSide 2.. In terms of biological role, pump for glutathione S-conjugates. The chain is ABC transporter C family member 6 (ABCC6) from Arabidopsis thaliana (Mouse-ear cress).